The chain runs to 245 residues: 5-oxoprolinase subunit A (245 aa).

Belongs to the LamB/PxpA family. Forms a complex composed of PxpA, PxpB and PxpC.

It carries out the reaction 5-oxo-L-proline + ATP + 2 H2O = L-glutamate + ADP + phosphate + H(+). Its function is as follows. Catalyzes the cleavage of 5-oxoproline to form L-glutamate coupled to the hydrolysis of ATP to ADP and inorganic phosphate. The sequence is that of 5-oxoprolinase subunit A from Yersinia pseudotuberculosis serotype O:1b (strain IP 31758).